We begin with the raw amino-acid sequence, 320 residues long: Pyrroline-5-carboxylate reductase 2 (320 aa).

Residue S2 is modified to N-acetylserine. NADP(+)-binding positions include 6-11 (IGAGQL) and S34. Residues A8, Q10, L11, S34, E36, N56, V70, K71, and A97 each coordinate NADPH. NADP(+) is bound by residues N56, 69 to 72 (AVKP), and 95 to 97 (CAA). Position 164 (E164) interacts with L-proline. NADPH is bound at residue N230. L-proline contacts are provided by A237 and T238. A compositionally biased stretch (low complexity) spans 295 to 305 (PTVSTLTPSSP). Residues 295-320 (PTVSTLTPSSPGKLLTRSLALGGKKD) form a disordered region. S304 carries the phosphoserine modification.

The protein belongs to the pyrroline-5-carboxylate reductase family. As to quaternary structure, homodecamer; composed of 5 homodimers. Interacts with LTO1. As to expression, detected in erythrocytes (at protein level). Expressed in fetal brain.

Its subcellular location is the cytoplasm. The protein localises to the mitochondrion. The enzyme catalyses L-proline + NADP(+) = (S)-1-pyrroline-5-carboxylate + NADPH + 2 H(+). It catalyses the reaction L-proline + NAD(+) = (S)-1-pyrroline-5-carboxylate + NADH + 2 H(+). It participates in amino-acid biosynthesis; L-proline biosynthesis; L-proline from L-glutamate 5-semialdehyde: step 1/1. Subject to competitive inhibition by NADP. Was reported not to be inhibited by proline. However other study demonstrated an inhibition by proline. Oxidoreductase that catalyzes the last step in proline biosynthesis, which corresponds to the reduction of pyrroline-5-carboxylate to L-proline using NAD(P)H. At physiologic concentrations, has higher specific activity in the presence of NADH. Involved in cellular response to oxidative stress. In some cell types, such as erythrocytes, its primary function may be the generation of NADP(+). In Homo sapiens (Human), this protein is Pyrroline-5-carboxylate reductase 2.